Here is a 196-residue protein sequence, read N- to C-terminus: MIILAALLAYILGSVPFGYLTSKYLWGVDITKKGSGNIGATNVYRNLGPYPGAITAIGDVGKGMLAVYIGSLLAGERGALVASFFVVIGHAYSIFLKFHGGKIVATTFGVLIMTSIKVTVVVFFIWLTVMLISRYVSLGSIVCGLSIPLIMLLFGLDLSYIYLGIFLAVMIFYRHRDNIKRLRSGTENKIGTRKNG.

5 helical membrane-spanning segments follow: residues 1-21 (MIIL…GYLT), 53-73 (AITA…GSLL), 78-98 (GALV…FLKF), 112-132 (IMTS…VMLI), and 152-172 (LLFG…VMIF).

This sequence belongs to the PlsY family. In terms of assembly, probably interacts with PlsX.

The protein localises to the cell membrane. It catalyses the reaction an acyl phosphate + sn-glycerol 3-phosphate = a 1-acyl-sn-glycero-3-phosphate + phosphate. Its pathway is lipid metabolism; phospholipid metabolism. Functionally, catalyzes the transfer of an acyl group from acyl-phosphate (acyl-PO(4)) to glycerol-3-phosphate (G3P) to form lysophosphatidic acid (LPA). This enzyme utilizes acyl-phosphate as fatty acyl donor, but not acyl-CoA or acyl-ACP. The sequence is that of Glycerol-3-phosphate acyltransferase from Carboxydothermus hydrogenoformans (strain ATCC BAA-161 / DSM 6008 / Z-2901).